The following is a 179-amino-acid chain: Large ribosomal subunit protein uL6 (179 aa).

This sequence belongs to the universal ribosomal protein uL6 family. Part of the 50S ribosomal subunit.

This protein binds to the 23S rRNA, and is important in its secondary structure. It is located near the subunit interface in the base of the L7/L12 stalk, and near the tRNA binding site of the peptidyltransferase center. This is Large ribosomal subunit protein uL6 from Bacillus anthracis.